The primary structure comprises 268 residues: Tryptophan synthase alpha chain (268 aa).

Residues glutamate 49 and aspartate 60 each act as proton acceptor in the active site.

Belongs to the TrpA family. Tetramer of two alpha and two beta chains.

It catalyses the reaction (1S,2R)-1-C-(indol-3-yl)glycerol 3-phosphate + L-serine = D-glyceraldehyde 3-phosphate + L-tryptophan + H2O. It participates in amino-acid biosynthesis; L-tryptophan biosynthesis; L-tryptophan from chorismate: step 5/5. Functionally, the alpha subunit is responsible for the aldol cleavage of indoleglycerol phosphate to indole and glyceraldehyde 3-phosphate. The sequence is that of Tryptophan synthase alpha chain from Yersinia pseudotuberculosis serotype O:1b (strain IP 31758).